The primary structure comprises 324 residues: MTIAVTGSIATDHLMRFPGRFSEQLLPEHLHKVSLSFLVDDLVMHRGGVAGNMAFAIGVLGGEVALVGAAGADFADYRDWLKARGVNCDHVLISETAHTARFTCTTDVDMAQIASFYPGAMSEARNIKLADVVSAIGKPELVIIGANDPEAMFLHTEECRKLGLAFAADPSQQLARLSGEEIRRLVNGAAYLFTNDYEWDLLLSKTGWSEADVMAQIDLRVTTLGPKGVDLVEPDGTTIHVGVVPETSQTDPTGVGDAFRAGFLTGRSAGLGLERSAQLGSLVAVLVLESTGTQEWQWDYEAAASRLAGAYGEHAAAEIVAVLA.

Residues S8, D12, S36, G48, N52, F102, F116, and 172–173 (QQ) each bind substrate. Residues N195, 223 to 228 (TLGPKG), and G256 contribute to the ATP site. Position 257 (D257) interacts with substrate. D257 serves as the catalytic Proton acceptor.

It belongs to the carbohydrate kinase PfkB family. In terms of assembly, homodimer. It depends on Mg(2+) as a cofactor.

It catalyses the reaction adenosine + ATP = AMP + ADP + H(+). The catalysed reaction is adenosine + GTP = GDP + AMP + H(+). The enzyme catalyses dGTP + adenosine = dGDP + AMP + H(+). The protein operates within purine metabolism; AMP biosynthesis via salvage pathway; AMP from adenosine: step 1/1. Its function is as follows. Catalyzes the phosphorylation of adenosine to adenosine monophosphate (AMP). Prefers dGTP and GTP to ATP as phosphate donors in vitro. The chain is Adenosine kinase (adoK) from Mycobacterium bovis (strain ATCC BAA-935 / AF2122/97).